The following is a 692-amino-acid chain: Ena/VASP-like protein (692 aa).

A WH1 domain is found at 1–112 (MSEQSICQAR…NAMLFALNIM (112 aa)). Disordered stretches follow at residues 116-310 (DGGP…VQKN), 466-518 (SAAM…YEES), and 531-650 (KLRK…NDVS). Polar residues-rich tracts occupy residues 123 to 132 (RQAQNIQNGP) and 159 to 169 (STTVSTLQINV). The span at 214-226 (SSKSTNKSSNRTS) shows a compositional bias: low complexity. Positions 231–267 (LQNSHCGSEPSTSQSSAFSPIRPSNGTVSRSIKQISL) are enriched in polar residues. Composition is skewed to low complexity over residues 288–310 (PSLS…VQKN) and 466–479 (SAAM…APAP). The segment covering 480 to 506 (ASGPPPPPPPGPPPPSGGTPPPAPPLP) has biased composition (pro residues). The EVH2 block A stretch occupies residues 522 to 542 (GLAAALAGAKLRKVQRPEDGS). The tract at residues 522 to 689 (GLAAALAGAK…DAIRQELSRI (168 aa)) is EVH2. Residues 531 to 534 (KLRK) carry the KLKR motif. An EVH2 block B region spans residues 563–580 (GGLMEEMNKLLAKRRKAA). Over residues 597–617 (EDASLSSSPVTRGPTPQNSSD) the composition is skewed to polar residues. The segment covering 618 to 628 (LGKKPWERSNS) has biased composition (basic and acidic residues). The segment at 655-689 (DFDRMKQEILEEVVRELHKVKEEIIDAIRQELSRI) is EVH2 block C.

This sequence belongs to the Ena/VASP family. As to expression, during embryonic and tadpole development, expressed in the cement gland, brain, neural tube, myotome and neural placodes, including the otic, lateral line and olfactory placodes. All isoforms show similar spatial expression patterns.

Its subcellular location is the cytoplasm. It localises to the cytoskeleton. It is found in the stress fiber. The protein localises to the cell projection. The protein resides in the lamellipodium. Its function is as follows. Ena/VASP proteins are actin-associated proteins involved in a range of processes dependent on cytoskeleton remodeling and cell polarity such as axon guidance and lamellipodial and filopodial dynamics in migrating cells. Evl enhances actin nucleation and polymerization. The sequence is that of Ena/VASP-like protein from Xenopus laevis (African clawed frog).